The sequence spans 364 residues: Bifunctional protein Rv2228c (364 aa).

The RNase H type-1 domain maps to 1-139 (MKVVIEADGG…MDAAAQSAAA (139 aa)). The Mg(2+) site is built by Asp8, Glu49, Asp73, and Asp123. His172 acts as the Tele-phosphohistidine intermediate in catalysis. Glu246 serves as the catalytic Proton donor/acceptor; for phosphatase activity.

In the N-terminal section; belongs to the RNase H family. It in the C-terminal section; belongs to the histidine phosphatase superfamily. As to quaternary structure, the N-terminal domain alone is monomeric in solution but associates in the crystal to form a dimer. Requires Mg(2+) as cofactor.

The enzyme catalyses Endonucleolytic cleavage to 5'-phosphomonoester.. It carries out the reaction adenosylcob(III)alamin 5'-phosphate + H2O = adenosylcob(III)alamin + phosphate. It catalyses the reaction alpha-ribazole 5'-phosphate + H2O = alpha-ribazole + phosphate. It functions in the pathway nucleoside biosynthesis; alpha-ribazole biosynthesis; alpha-ribazole from 5,6-dimethylbenzimidazole: step 2/2. Endonuclease that displays both RNase H activity with a hybrid RNA/DNA substrate as well as double-stranded RNase activity. As the only authenticated RNase HI in M.tuberculosis, probably plays an important role in the physiology of this organism, being likely involved in bacterial replication. Its function is as follows. Catalyzes the hydrolysis of the phospho group from alpha-ribazole 5'-phosphate to form alpha-ribazole. May also catalyze the conversion of adenosylcobalamin 5'-phosphate to adenosylcobalamin (vitamin B12). Has a possible role in B12 recycling, but the primary role of the C-terminal domain of this phosphatase enzyme could be phosphate generation to help bacterial survival within the macrophage, which is a phosphate-deprived environment. This Mycobacterium tuberculosis (strain ATCC 25618 / H37Rv) protein is Bifunctional protein Rv2228c.